A 1007-amino-acid polypeptide reads, in one-letter code: Probable beta-galactosidase A (1007 aa).

The N-terminal stretch at 1–18 (MRLLPVWTAALLAAQAAG) is a signal peptide. The substrate site is built by Tyr-96, Asn-140, Ala-141, and Glu-142. Asn-156 is a glycosylation site (N-linked (GlcNAc...) asparagine). Asn-199 provides a ligand contact to substrate. Glu-200 serves as the catalytic Proton donor. Cysteines 205 and 206 form a disulfide. Residue Tyr-260 participates in substrate binding. A disulfide bridge connects residues Cys-266 and Cys-315. Catalysis depends on Glu-298, which acts as the Nucleophile. Residue Tyr-364 coordinates substrate. Residues Asn-405, Asn-422, Asn-621, Asn-740, Asn-775, and Asn-914 are each glycosylated (N-linked (GlcNAc...) asparagine).

It belongs to the glycosyl hydrolase 35 family.

It is found in the secreted. The catalysed reaction is Hydrolysis of terminal non-reducing beta-D-galactose residues in beta-D-galactosides.. Cleaves beta-linked terminal galactosyl residues from gangliosides, glycoproteins, and glycosaminoglycans. The polypeptide is Probable beta-galactosidase A (lacA) (Emericella nidulans (strain FGSC A4 / ATCC 38163 / CBS 112.46 / NRRL 194 / M139) (Aspergillus nidulans)).